Here is a 63-residue protein sequence, read N- to C-terminus: Probable rubredoxin (63 aa).

Residues 11 to 62 (MKRYKCRVCGYIYDPEKGEPRTDTPPGTPFEDLPETWRCPSCGAKKKMFKPL) form the Rubredoxin-like domain. 4 residues coordinate Fe cation: C16, C19, C49, and C52.

The protein belongs to the rubredoxin family. Requires Fe(3+) as cofactor.

Its function is as follows. Rubredoxin is a small nonheme, iron protein lacking acid-labile sulfide. Its single Fe, chelated to 4 Cys, functions as an electron acceptor and may also stabilize the conformation of the molecule. The chain is Probable rubredoxin from Methanothermobacter thermautotrophicus (strain ATCC 29096 / DSM 1053 / JCM 10044 / NBRC 100330 / Delta H) (Methanobacterium thermoautotrophicum).